The primary structure comprises 561 residues: uncharacterized protein (561 aa).

2 helical membrane passes run 29-49 (FIFN…KKII) and 80-100 (FLFH…ASII).

It is found in the cell membrane. This is an uncharacterized protein from Mycoplasma genitalium (strain ATCC 33530 / DSM 19775 / NCTC 10195 / G37) (Mycoplasmoides genitalium).